A 68-amino-acid chain; its full sequence is UPF0352 protein CPS_2611 (68 aa).

The protein belongs to the UPF0352 family.

The polypeptide is UPF0352 protein CPS_2611 (Colwellia psychrerythraea (strain 34H / ATCC BAA-681) (Vibrio psychroerythus)).